Reading from the N-terminus, the 354-residue chain is AT-hook motif nuclear-localized protein 11 (354 aa).

Disordered stretches follow at residues 1 to 158 (MDRR…MMPS) and 290 to 354 (KREE…LMRG). 2 stretches are compositionally biased toward low complexity: residues 46–55 (NSISPFGSNP) and 75–96 (VDSSPADSSAAAAGALVAPPSG). The Bipartite nuclear localization signal motif lies at 101 to 109 (KRKRGRPRK). The a.T hook 1 DNA-binding region spans 101–113 (KRKRGRPRKYGQD). Low complexity predominate over residues 122 to 133 (SPSISNVSPNSN). Positions 134–146 (KRGRGRPPGSGKK) form a DNA-binding region, a.T hook 2. The PPC domain maps to 159 to 302 (STGMSFTPHV…ETSEDVQDTD (144 aa)). The segment covering 294–303 (TSEDVQDTDA) has biased composition (acidic residues). Positions 304–327 (LENNNDNTAATSPPVPQQSQNIVQ) are enriched in polar residues. Residues 340-354 (MDMHHPHMDIDLMRG) show a composition bias toward basic and acidic residues.

It is found in the nucleus. Its function is as follows. Transcription factor that specifically binds AT-rich DNA sequences related to the nuclear matrix attachment regions (MARs). The sequence is that of AT-hook motif nuclear-localized protein 11 from Arabidopsis thaliana (Mouse-ear cress).